We begin with the raw amino-acid sequence, 187 residues long: Elongation factor P (187 aa).

It belongs to the elongation factor P family.

Its subcellular location is the cytoplasm. It functions in the pathway protein biosynthesis; polypeptide chain elongation. In terms of biological role, involved in peptide bond synthesis. Stimulates efficient translation and peptide-bond synthesis on native or reconstituted 70S ribosomes in vitro. Probably functions indirectly by altering the affinity of the ribosome for aminoacyl-tRNA, thus increasing their reactivity as acceptors for peptidyl transferase. In Syntrophus aciditrophicus (strain SB), this protein is Elongation factor P.